A 526-amino-acid chain; its full sequence is Lycopene epsilon cyclase, chloroplastic (526 aa).

108 to 136 contacts NAD(+); sequence LVVIGCGPAGLALAAESAKLGLNVGLVGP. 2 helical membrane-spanning segments follow: residues 443 to 463 and 477 to 497; these read FFLF…RSFF and FLGS…MFII.

The protein belongs to the lycopene cyclase family.

The protein resides in the plastid. Its subcellular location is the chloroplast membrane. The catalysed reaction is a carotenoid psi-end group = a carotenoid epsilon-end group. It functions in the pathway carotenoid biosynthesis; alpha-zeacarotene biosynthesis. Its pathway is carotenoid biosynthesis; delta-carotene biosynthesis. Functionally, catalyzes the single cyclization reaction which converts lycopene to delta-carotene and neurosporene to alpha-zeacarotene. Required for lutein biosynthesis. This chain is Lycopene epsilon cyclase, chloroplastic, found in Solanum lycopersicum (Tomato).